The chain runs to 184 residues: ADP-ribosylation factor-like protein 3 (184 aa).

Glycine 2 carries the N-myristoyl glycine lipid modification. GTP-binding positions include 24-31 (GLDNAGKT), 68-72 (DIGGQ), and 127-130 (NKQD).

The protein belongs to the small GTPase superfamily. Arf family.

Its subcellular location is the golgi apparatus. In terms of biological role, GTP-binding protein that may be involved in protein trafficking; may modulate vesicle budding and uncoating within the Golgi apparatus. This is ADP-ribosylation factor-like protein 3 (arl-3) from Caenorhabditis elegans.